The sequence spans 285 residues: Golgi phosphoprotein 3-like (285 aa).

The segment at 1–39 (MTTLTHRARRTEVGKNSEKKVESEENVNQDRNQDNEDIG) is disordered. Positions 10-23 (RTEVGKNSEKKVES) are enriched in basic and acidic residues. A 1,2-diacyl-sn-glycero-3-phospho-(1D-myo-inositol 4-phosphate) contacts are provided by W67 and R76. Phosphoserine is present on S112. 2 residues coordinate a 1,2-diacyl-sn-glycero-3-phospho-(1D-myo-inositol 4-phosphate): R157 and R160. Positions 176–187 (EKQNFLLFDMTT) are beta-hairpin required for oligomerization.

It belongs to the GOLPH3/VPS74 family. As to quaternary structure, homooligomer. Does not interact MYO18; differs from GOLPH3 by its inability to interact with MYO18. May interact with ARF1.

It localises to the golgi apparatus. The protein localises to the golgi stack membrane. Its subcellular location is the trans-Golgi network membrane. Phosphatidylinositol-4-phosphate-binding protein that may antagonize the action of GOLPH3 which is required for the process of vesicle budding at the Golgi and anterograde transport to the plasma membrane. In Bos taurus (Bovine), this protein is Golgi phosphoprotein 3-like (GOLPH3L).